Here is a 441-residue protein sequence, read N- to C-terminus: Tubulin beta chain (441 aa).

GTP-binding residues include Q11, E69, S138, G142, T143, G144, N204, and N226. E69 is a Mg(2+) binding site.

This sequence belongs to the tubulin family. Dimer of alpha and beta chains. A typical microtubule is a hollow water-filled tube with an outer diameter of 25 nm and an inner diameter of 15 nM. Alpha-beta heterodimers associate head-to-tail to form protofilaments running lengthwise along the microtubule wall with the beta-tubulin subunit facing the microtubule plus end conferring a structural polarity. Microtubules usually have 13 protofilaments but different protofilament numbers can be found in some organisms and specialized cells. Mg(2+) is required as a cofactor.

It localises to the cytoplasm. The protein resides in the cytoskeleton. In terms of biological role, tubulin is the major constituent of microtubules, a cylinder consisting of laterally associated linear protofilaments composed of alpha- and beta-tubulin heterodimers. Microtubules grow by the addition of GTP-tubulin dimers to the microtubule end, where a stabilizing cap forms. Below the cap, tubulin dimers are in GDP-bound state, owing to GTPase activity of alpha-tubulin. The protein is Tubulin beta chain of Babesia bovis.